The chain runs to 387 residues: Chaperone protein DnaJ (387 aa).

Residues 5–70 (DYYEVLGVAK…QKRAAYDRFG (66 aa)) form the J domain. The CR-type zinc finger occupies 140 to 218 (GKTETIRLPT…CGGAGRVTRE (79 aa)). Residues cysteine 153, cysteine 156, cysteine 170, cysteine 173, cysteine 192, cysteine 195, cysteine 206, and cysteine 209 each coordinate Zn(2+). CXXCXGXG motif repeat units lie at residues 153-160 (CEVCAGSG), 170-177 (CPTCGGYG), 192-199 (CPNCQGRG), and 206-213 (CAACGGAG).

This sequence belongs to the DnaJ family. As to quaternary structure, homodimer. The cofactor is Zn(2+).

The protein resides in the cytoplasm. Its function is as follows. Participates actively in the response to hyperosmotic and heat shock by preventing the aggregation of stress-denatured proteins and by disaggregating proteins, also in an autonomous, DnaK-independent fashion. Unfolded proteins bind initially to DnaJ; upon interaction with the DnaJ-bound protein, DnaK hydrolyzes its bound ATP, resulting in the formation of a stable complex. GrpE releases ADP from DnaK; ATP binding to DnaK triggers the release of the substrate protein, thus completing the reaction cycle. Several rounds of ATP-dependent interactions between DnaJ, DnaK and GrpE are required for fully efficient folding. Also involved, together with DnaK and GrpE, in the DNA replication of plasmids through activation of initiation proteins. In Methylobacterium sp. (strain 4-46), this protein is Chaperone protein DnaJ.